A 290-amino-acid polypeptide reads, in one-letter code: Cilia- and flagella-associated protein 298-A (290 aa).

Belongs to the CFAP298 family.

The protein resides in the cytoplasm. Its subcellular location is the cytoskeleton. It localises to the cilium basal body. Functionally, plays a role in motile cilium function, possibly by acting on outer dynein arm assembly. Seems to be important for initiation rather than maintenance of cilium motility. Required for correct positioning of the cilium at the apical cell surface, suggesting an additional role in the planar cell polarity (PCP) pathway. May suppress canonical Wnt signaling activity. In Xenopus laevis (African clawed frog), this protein is Cilia- and flagella-associated protein 298-A (cfap298-a).